The primary structure comprises 1499 residues: Rho GTPase-activating protein 35 (1499 aa).

The has GTPase activity, required for proper localization stretch occupies residues 1–266 (MMMARKQDVR…IPYFEALKQQ (266 aa)). Residues Lys28, 33–37 (IGKSC), Leu52, Ser56, 95–97 (EQT), 201–203 (KCD), and 229–231 (SAR) each bind GTP. FF domains are found at residues 270–327 (IATA…HIHR), 368–422 (KLLE…HLEK), 429–483 (RAEM…HQKQ), and 485–550 (IDRA…HIHF). Tyr308 carries the phosphotyrosine modification. Position 589 is a phosphoserine (Ser589). In terms of domain architecture, pG1 pseudoGTPase spans 592 to 767 (DLNIDRINLV…LLDSKRNLNL (176 aa)). 2 positions are modified to phosphoserine: Ser770 and Ser773. A pG2 pseudoGTPase domain is found at 783–947 (RIVMCLMCGD…FKDVVEKKNI (165 aa)). Residues Ser970, Ser975, Ser985, and Ser1072 each carry the phosphoserine modification. Phosphotyrosine is present on Tyr1087. Tyr1105 is modified (phosphotyrosine; by ABL2 and PTK6). The span at 1124-1141 (KAQSNGSGNGSDSEMDTS) shows a compositional bias: polar residues. Residues 1124–1148 (KAQSNGSGNGSDSEMDTSSLERGRK) are disordered. 6 positions are modified to phosphoserine: Ser1134, Ser1142, Ser1150, Ser1176, Ser1179, and Ser1221. The interval 1177–1207 (VGSDDELGPIRKKEEDQASQGYKGDNAVIPY) is disordered. Positions 1213–1236 (PRRRNILRSLRRNTKKPKPKPRPS) are required for phospholipid binding and regulation of the substrate preference. Thr1226 carries the post-translational modification Phosphothreonine. Residue Ser1236 is modified to Phosphoserine. A Rho-GAP domain is found at 1249 to 1436 (VPLTTVVTPE…LFIQQCPFFF (188 aa)). The tract at residues 1446–1499 (GAAPGSPSAMAPTVPFLTSTPATSQPSPPQSPPPTPQSPMQPLLSSQLQAEHTL) is disordered. The span at 1448-1470 (APGSPSAMAPTVPFLTSTPATSQ) shows a compositional bias: low complexity. A compositionally biased stretch (pro residues) spans 1471 to 1484 (PSPPQSPPPTPQSP). Residues Ser1472 and Ser1476 each carry the phosphoserine modification. The residue at position 1480 (Thr1480) is a Phosphothreonine. A Phosphoserine modification is found at Ser1483. Positions 1485–1499 (MQPLLSSQLQAEHTL) are enriched in low complexity.

As to quaternary structure, interacts with the general transcription factor GTF2I, the interaction sequesters GTF2I in the cytoplasm. Interacts with RASA1. Phosphorylation of Tyr-1105 by PTK6 promotes the association with RASA1, inactivating RHOA while activating RAS. Phosphorylation at Tyr-308 by PDGFRA inhibits binding to GTF2I. Phosphorylated by PRKCA at Ser-1221 and Thr-1226, induces relocalization from the cytoplasm to regions of plasma membrane ruffling and prevents the binding and substrate specificity regulation by phospholipids. In brain, phosphorylated by FYN and SRC. During focal adhesion formation, phosphorylated by MAPK1 and MAPK3 at the C-terminal region, probably at Ser-1451, Ser-1476, Thr-1480 and Ser-1483. Phosphorylation by MAPK1 and MAPK3 inhibits GAP function and localizes ARGHAP35 away from newly forming focal adhesions and stress fibers in cells spreading on fibronectin. Phosphorylation at Ser-1476 and Thr-1480 by GSK3B requires priming by MAPK and inhibits RhoGAP activity and modulates polarized cell migration. In terms of tissue distribution, expressed in the developing kidneys. Expressed in all regions of the mature nervous system (at protein level). Detected in neutrophils (at protein level).

It localises to the cytoplasm. It is found in the cytoskeleton. Its subcellular location is the cilium basal body. The protein resides in the nucleus. The protein localises to the cell membrane. Rho GTPase-activating protein (GAP). Binds several acidic phospholipids which inhibits the Rho GAP activity to promote the Rac GAP activity. This binding is inhibited by phosphorylation by PRKCA. Involved in cell differentiation as well as cell adhesion and migration, plays an important role in retinal tissue morphogenesis, neural tube fusion, midline fusion of the cerebral hemispheres and mammary gland branching morphogenesis. Transduces signals from p21-ras to the nucleus, acting via the ras GTPase-activating protein (GAP). Transduces SRC-dependent signals from cell-surface adhesion molecules, such as laminin, to promote neurite outgrowth. Regulates axon outgrowth, guidance and fasciculation. Modulates Rho GTPase-dependent F-actin polymerization, organization and assembly, is involved in polarized cell migration and in the positive regulation of ciliogenesis and cilia elongation. During mammary gland development, is required in both the epithelial and stromal compartments for ductal outgrowth. Represses transcription of the glucocorticoid receptor by binding to the cis-acting regulatory sequence 5'-GAGAAAAGAAACTGGAGAAACTC-3'; this function is however unclear and would need additional experimental evidences. The polypeptide is Rho GTPase-activating protein 35 (Mus musculus (Mouse)).